A 62-amino-acid chain; its full sequence is Protein YmcF (62 aa).

This sequence belongs to the YmcF/YnqF peptide family.

This Escherichia coli (strain K12) protein is Protein YmcF.